The chain runs to 623 residues: Endoglucanase 7 (623 aa).

Topologically, residues 1 to 79 (MHPGNVWGGS…LGCVSVSRTV (79 aa)) are cytoplasmic. The helical; Signal-anchor for type II membrane protein transmembrane segment at 80-100 (FLWTVGSIAVLFLVVALPIII) threads the bilayer. The Extracellular segment spans residues 101 to 623 (VKSLPRHKSA…TPPPPKAWKP (523 aa)). Residues Asn116, Asn221, Asn328, Asn349, Asn412, Asn429, and Asn464 are each glycosylated (N-linked (GlcNAc...) asparagine). The active site involves His517. Residue Asn548 is glycosylated (N-linked (GlcNAc...) asparagine). The active site involves Asp565. A glycan (N-linked (GlcNAc...) asparagine) is linked at Asn571. Glu574 is a catalytic residue.

It belongs to the glycosyl hydrolase 9 (cellulase E) family. In terms of tissue distribution, expressed in basal region of leaf blade and proximal parts of leaf and floral organ.

It is found in the membrane. The catalysed reaction is Endohydrolysis of (1-&gt;4)-beta-D-glucosidic linkages in cellulose, lichenin and cereal beta-D-glucans.. The protein is Endoglucanase 7 (KOR2) of Arabidopsis thaliana (Mouse-ear cress).